We begin with the raw amino-acid sequence, 666 residues long: MKAFRKLLLGLALPTTIGPLLGLLLTNTDTVKNESLTTVRHRSSINQDFDGIFHTVKLLEPIQQSNADPAASFALFQQKFPNLKRVANSTLNTFDVYNLLSGWKSSLTAYLNQVLALQQRIKAADQIFPNQKETLPKDENPNIFEVLGAYGGKGFFPTLGSNGLHLPPQLFQFFRDFQLSSFTIKDFEVALVSEPDIVQHDKVRYAFQVQFNLVLQLQINRNPVLFDFNLQLKTNNFANQTSFDELFNEKTNPLNWQFFSKLKVNHLVYEGNDITQLANTLLQSQFNVLQLDLNKSIYRLNLNAMAQRFEHDWVQPLYAKRTQAKIAYEAEQARIAAENKRKELERQKLLAELKAKAEHYQKIKQARENMLKGLKSITDFVKFWKSPDRLLVGFNKQDDITTRAGVYKALQIAYANYPQWTFYLTLQGWKNGSELLLKRPSWTNLLSDIHFQKAFNLKNTVSEQTLGAATLPGYGYYGLRMSDWLRWALGYYSYIHMGVPQNVQTKFTGTPDNEQQVWIANEPFEWNKHYGVGPKYKDKAYRFNMEISFELEGWIAVKWWAWAFKGSIPGNWKGKLKVTHLFDGMVPVWELGPVNTHLPQYSFTDQQQLLFVPHSIQKIEAIGADKGINDLLKTQNLHNLERLSYESTNPIDLISYLLYAIQYIKV.

It belongs to the MG032/MG096/MG288 family.

This is an uncharacterized protein from Mycoplasma pneumoniae (strain ATCC 29342 / M129 / Subtype 1) (Mycoplasmoides pneumoniae).